We begin with the raw amino-acid sequence, 154 residues long: Aspartate carbamoyltransferase regulatory chain (154 aa).

Residues Cys-109, Cys-114, Cys-138, and Cys-141 each coordinate Zn(2+).

It belongs to the PyrI family. Contains catalytic and regulatory chains. Requires Zn(2+) as cofactor.

In terms of biological role, involved in allosteric regulation of aspartate carbamoyltransferase. The protein is Aspartate carbamoyltransferase regulatory chain of Tolumonas auensis (strain DSM 9187 / NBRC 110442 / TA 4).